A 182-amino-acid polypeptide reads, in one-letter code: Protein Syd (182 aa).

This sequence belongs to the Syd family.

Its subcellular location is the cell inner membrane. Interacts with the SecY protein in vivo. May bind preferentially to an uncomplexed state of SecY, thus functioning either as a chelating agent for excess SecY in the cell or as a regulatory factor that negatively controls the translocase function. This Pectobacterium atrosepticum (strain SCRI 1043 / ATCC BAA-672) (Erwinia carotovora subsp. atroseptica) protein is Protein Syd.